We begin with the raw amino-acid sequence, 436 residues long: MSRPLTKVTQQGDRIAIVSGLRIPFAKQATSYHDIPAVDLGKSVVSELVTRSGLLPEKIDQLVFGQVVQMPEAPNIAREIVLGAGLSVSTDAYSVSRACATSFQAIANVAESIMAGTVNIGIAGGADSSSVLPIGVTKSLARTLVEMNKAKTLSQRLKLLSRLKFRDLLPVSPAVAEYSTGLRMGDTAEQMAKTYRISREDQDALAHRSHILAAKAWEQGLLVDEVMTAHFPPYREALLEDNNIRKNSVLTSYAKLRPAFDRKYGTVTAANSTPLTDGAAAVILMRESVAKALGTKPLGYLRSYAFSAIDVWQDMLLGPSYATPIALDRAGITLKDLTLIDMHEAFAAQTLANLKMFASDEFARNKLGRAQAIGEVDMDKFNVLGGSIAYGHPFAATGARMVTQVLNELRRRGGGLGLTTACAAGGLGTAMVLEVE.

The Acyl-thioester intermediate role is filled by Cys99. Catalysis depends on proton acceptor residues His392 and Cys422.

The protein belongs to the thiolase-like superfamily. Thiolase family. Heterotetramer of two alpha chains (FadJ) and two beta chains (FadI).

It localises to the cytoplasm. It catalyses the reaction an acyl-CoA + acetyl-CoA = a 3-oxoacyl-CoA + CoA. It participates in lipid metabolism; fatty acid beta-oxidation. In terms of biological role, catalyzes the final step of fatty acid oxidation in which acetyl-CoA is released and the CoA ester of a fatty acid two carbons shorter is formed. This chain is 3-ketoacyl-CoA thiolase, found in Photorhabdus laumondii subsp. laumondii (strain DSM 15139 / CIP 105565 / TT01) (Photorhabdus luminescens subsp. laumondii).